Here is a 198-residue protein sequence, read N- to C-terminus: Na(+)-translocating NADH-quinone reductase subunit E (198 aa).

Helical transmembrane passes span 11-31 (SVFI…FLAV), 35-55 (VSTA…SVPV), 77-97 (FLNF…LEMI), 110-130 (GIFL…SFMV), 140-160 (IVYG…LAGI), and 176-196 (LGIT…FSGV).

Belongs to the NqrDE/RnfAE family. As to quaternary structure, composed of six subunits; NqrA, NqrB, NqrC, NqrD, NqrE and NqrF.

The protein localises to the cell inner membrane. The catalysed reaction is a ubiquinone + n Na(+)(in) + NADH + H(+) = a ubiquinol + n Na(+)(out) + NAD(+). Functionally, NQR complex catalyzes the reduction of ubiquinone-1 to ubiquinol by two successive reactions, coupled with the transport of Na(+) ions from the cytoplasm to the periplasm. NqrA to NqrE are probably involved in the second step, the conversion of ubisemiquinone to ubiquinol. In Histophilus somni (strain 2336) (Haemophilus somnus), this protein is Na(+)-translocating NADH-quinone reductase subunit E.